Consider the following 227-residue polypeptide: tRNA (guanine-N(7)-)-methyltransferase (227 aa).

Glutamate 57, glutamate 82, aspartate 109, and aspartate 132 together coordinate S-adenosyl-L-methionine. Aspartate 132 is an active-site residue. Substrate-binding positions include lysine 136, aspartate 168, and 205–208 (TKFE).

This sequence belongs to the class I-like SAM-binding methyltransferase superfamily. TrmB family.

It catalyses the reaction guanosine(46) in tRNA + S-adenosyl-L-methionine = N(7)-methylguanosine(46) in tRNA + S-adenosyl-L-homocysteine. It participates in tRNA modification; N(7)-methylguanine-tRNA biosynthesis. In terms of biological role, catalyzes the formation of N(7)-methylguanine at position 46 (m7G46) in tRNA. This chain is tRNA (guanine-N(7)-)-methyltransferase, found in Leifsonia xyli subsp. xyli (strain CTCB07).